Reading from the N-terminus, the 941-residue chain is ATP-dependent 6-phosphofructokinase subunit beta (941 aa).

Residues 2–558 (PDASLFNGTS…HMKNFISTNS (557 aa)) form an N-terminal catalytic PFK domain 1 region. Residues Gly191, 255–256 (RC), and 285–288 (GDGS) each bind ATP. Asp286 contributes to the Mg(2+) binding site. Beta-D-fructose 6-phosphate is bound by residues 331–333 (SID), Arg368, 375–377 (MGR), Glu432, Arg460, and 466–469 (HVQR). Catalysis depends on Asp333, which acts as the Proton acceptor. The tract at residues 559–572 (ADHVPPSLPLEKRK) is interdomain linker. Residues 573–941 (KVAIINVGAP…SDMLSGRTSL (369 aa)) form a C-terminal regulatory PFK domain 2 region. Beta-D-fructose 2,6-bisphosphate contacts are provided by residues Arg643, 701–705 (TISNN), Arg739, 746–748 (QGG), Glu806, Lys832, 838–841 (HVQQ), and Arg918.

Belongs to the phosphofructokinase type A (PFKA) family. ATP-dependent PFK group I subfamily. Eukaryotic two domain clade 'E' sub-subfamily. As to quaternary structure, heterododecamer of 4 alpha, 4 beta and 4 gamma chains. The gamma chain bridges the N-terminal halves of the alpha and beta subunits. It depends on Mg(2+) as a cofactor.

It is found in the cytoplasm. The enzyme catalyses beta-D-fructose 6-phosphate + ATP = beta-D-fructose 1,6-bisphosphate + ADP + H(+). It functions in the pathway carbohydrate degradation; glycolysis; D-glyceraldehyde 3-phosphate and glycerone phosphate from D-glucose: step 3/4. Its activity is regulated as follows. Allosterically activated by ADP, AMP, or fructose 2,6-bisphosphate, and allosterically inhibited by ATP or citrate. Functionally, catalyzes the phosphorylation of D-fructose 6-phosphate to fructose 1,6-bisphosphate by ATP, the first committing step of glycolysis. The protein is ATP-dependent 6-phosphofructokinase subunit beta (PFK2) of Komagataella phaffii (strain GS115 / ATCC 20864) (Yeast).